A 486-amino-acid polypeptide reads, in one-letter code: ATP synthase subunit beta (486 aa).

170 to 177 contributes to the ATP binding site; sequence GGAGVGKT.

The protein belongs to the ATPase alpha/beta chains family. In terms of assembly, F-type ATPases have 2 components, CF(1) - the catalytic core - and CF(0) - the membrane proton channel. CF(1) has five subunits: alpha(3), beta(3), gamma(1), delta(1), epsilon(1). CF(0) has three main subunits: a(1), b(2) and c(9-12). The alpha and beta chains form an alternating ring which encloses part of the gamma chain. CF(1) is attached to CF(0) by a central stalk formed by the gamma and epsilon chains, while a peripheral stalk is formed by the delta and b chains.

The protein resides in the cell membrane. It catalyses the reaction ATP + H2O + 4 H(+)(in) = ADP + phosphate + 5 H(+)(out). Functionally, produces ATP from ADP in the presence of a proton gradient across the membrane. The catalytic sites are hosted primarily by the beta subunits. The sequence is that of ATP synthase subunit beta from Clavibacter sepedonicus (Clavibacter michiganensis subsp. sepedonicus).